Reading from the N-terminus, the 504-residue chain is Histidine ammonia-lyase (504 aa).

Positions 142–144 (ASG) form a cross-link, 5-imidazolinone (Ala-Gly). A 2,3-didehydroalanine (Ser) modification is found at serine 143.

Belongs to the PAL/histidase family. In terms of processing, contains an active site 4-methylidene-imidazol-5-one (MIO), which is formed autocatalytically by cyclization and dehydration of residues Ala-Ser-Gly.

Its subcellular location is the cytoplasm. The catalysed reaction is L-histidine = trans-urocanate + NH4(+). The protein operates within amino-acid degradation; L-histidine degradation into L-glutamate; N-formimidoyl-L-glutamate from L-histidine: step 1/3. This is Histidine ammonia-lyase from Staphylococcus aureus (strain MSSA476).